A 935-amino-acid polypeptide reads, in one-letter code: MADPGPASFSTRANALLRKNLTYQKRNLWSNIRLIMIPFYLCILLVIIQILFDTQVNNSADNRCGCECIERNRAGKCQRELCGLEHSKPDQAFFCSIPRPPLWPPLLQIPRPESRDVRGLRDDSCRRTGSCPVTILFTGNNRSLGTTVSENLFTSSVSANASEILRTLANNVLGTTVEADFTNYLDPGIASNLSIYNIQPRCILNATFPFSFEQPPLKFEKELRCVQGSNLWTNTSKEVNDKIFKGYKKGNPEGKINEIAAAYDLLNTDRNNFNVHIWYNSTYKDDAGNRLIKLIRVPRSVNLVSNAYLQFLQGPGTRMLFEYVKEMPKPETSLRLDIASLIGPLFFTWVILLLFPVILSSLVYEKQQHLRIIMKMHGLGDGPYWMISYAYFLTISVLYVICLMIFGSAIGLKFFRLNSYSIQFVFYFLYLNLQIALAFLVSSVFSKVKTSTVASYIYVFGSGLLGLFLLNFLIEDSSFPRGWIIVMELYPGFSLYRGLYELAQFAFRGNLRGEDGMKWKDFGDSAMDDVFYIIVVEWFLALIAAYYIDKISSSGRNPLFFLQNPFKKSPSLRRPSLQRQGSKVSVDMEKPDVTHESKKVERLMLESSTSHAIVCDNLKKVYPGRDGNPPKLAVRGLSLAVPSGECFGMLGPNGAGKTSFINMMTGLLKPTSGTALVQGLDICNDMDRVYTSMGVCPQHDLLWETLTGREHLLFYGRLKNLKGADLNQAVEESLKSVNLFHGGVADKPAGKYSGGMKRRLSVAISLIGNPKVVYMDEPSTGLDPASRKNLWTVIKRAKQNTAIILTTHSMEEAEFLCDRLGIFVDGGLQCIGNPKELKGRYGGSYVFTMTTSSEHEQNVEKLIKDVSPNAKKIYHIAGTQKFELPKEEVRISEVFQAVEKAKSNFTVFAWGLADTTLEDVFIKVVRNGQAFNVFS.

Transmembrane regions (helical) follow at residues 34–54, 338–358, 392–412, 424–444, 454–474, 483–503, and 528–548; these read LIMIPFYLCILLVIIQILFDT, IASLIGPLFFTWVILLLFPVI, FLTISVLYVICLMIFGSAIGL, FVFYFLYLNLQIALAFLVSSV, ASYIYVFGSGLLGLFLLNFLI, WIIVMELYPGFSLYRGLYELA, and DDVFYIIVVEWFLALIAAYYI. Residues 571-591 are disordered; sequence SLRRPSLQRQGSKVSVDMEKP. Residues 613 to 850 form the ABC transporter domain; sequence IVCDNLKKVY…YGGSYVFTMT (238 aa). 651–658 is an ATP binding site; the sequence is GPNGAGKT.

It belongs to the ABC transporter superfamily. ABCA family. CPR flippase (TC 3.A.1.211) subfamily.

It is found in the membrane. This Arabidopsis thaliana (Mouse-ear cress) protein is ABC transporter A family member 7 (ABCA7).